The sequence spans 289 residues: Signal peptidase I (289 aa).

Residues 1–43 (MKKLTSTTTTLWDNKLFINNLKNFMQTNTESNNNKTTAQEWKS) lie on the Cytoplasmic side of the membrane. A helical membrane pass occupies residues 44-64 (FILVVVIALMIRILIIESFVV). At 65–289 (PTGSMKATIL…IFRNLYSIED (225 aa)) the chain is on the periplasmic side. Active-site residues include Ser68 and Lys131.

It belongs to the peptidase S26 family.

The protein resides in the cell inner membrane. The enzyme catalyses Cleavage of hydrophobic, N-terminal signal or leader sequences from secreted and periplasmic proteins.. This Rickettsia bellii (strain OSU 85-389) protein is Signal peptidase I (lepB).